Here is a 206-residue protein sequence, read N- to C-terminus: Capsid assembly scaffolding protein (206 aa).

Positions 1-13 are excised as a propeptide; that stretch reads MEENKLKFNLQFF. Disordered stretches follow at residues 1–50, 83–134, and 173–206; these read MEEN…PEQQ, AAKL…VDSS, and RQSP…IIKN. Basic and acidic residues-rich tracts occupy residues 25-38 and 83-127; these read GDGK…KEND and AAKL…KMLS. The segment covering 173 to 192 has biased composition (polar residues); it reads RQSPLTGGDSFNHSTKNKPQ. Residues 186-206 form a helix-and-hook motif region; the sequence is STKNKPQNLAEIARQKRIIKN.

Found in the procapsid with the major capsid protein in a 2:1 capsid protein:scaffold protein molecular ratio. Post-translationally, the N-terminus is cleaved by ribosomal processing protease Prp.

Functionally, scaffolding protein involved in icosahedric procapsid assembly. Coassembles with capsid protein(s) to form the procapsid. The scaffolding protein is found within the capsid as a series of concentric shells. During DNA packaging, the scaffolding protein molecules are released from the procapsid. This Staphylococcus phage 80alpha protein is Capsid assembly scaffolding protein.